A 361-amino-acid polypeptide reads, in one-letter code: Phospho-N-acetylmuramoyl-pentapeptide-transferase (361 aa).

A run of 10 helical transmembrane segments spans residues 25-45, 72-92, 95-115, 133-153, 169-189, 200-220, 240-260, 264-284, 289-309, and 338-358; these read TGGA…WIIN, TPTM…VLWA, VNPY…VGFY, TRLL…VWLG, VVLN…VGAG, GLAI…AYLA, LAVL…FNAP, IFMG…IAVA, IVLA…IVQV, and QIVI…LATL.

This sequence belongs to the glycosyltransferase 4 family. MraY subfamily. The cofactor is Mg(2+).

It is found in the cell inner membrane. It carries out the reaction UDP-N-acetyl-alpha-D-muramoyl-L-alanyl-gamma-D-glutamyl-meso-2,6-diaminopimeloyl-D-alanyl-D-alanine + di-trans,octa-cis-undecaprenyl phosphate = di-trans,octa-cis-undecaprenyl diphospho-N-acetyl-alpha-D-muramoyl-L-alanyl-D-glutamyl-meso-2,6-diaminopimeloyl-D-alanyl-D-alanine + UMP. Its pathway is cell wall biogenesis; peptidoglycan biosynthesis. Catalyzes the initial step of the lipid cycle reactions in the biosynthesis of the cell wall peptidoglycan: transfers peptidoglycan precursor phospho-MurNAc-pentapeptide from UDP-MurNAc-pentapeptide onto the lipid carrier undecaprenyl phosphate, yielding undecaprenyl-pyrophosphoryl-MurNAc-pentapeptide, known as lipid I. This is Phospho-N-acetylmuramoyl-pentapeptide-transferase from Rhodopseudomonas palustris (strain BisB5).